The sequence spans 351 residues: Cell shape-determining protein MreB (351 aa).

ATP contacts are provided by residues T20–N22, G169–T171, E217–K220, and G299–L302.

This sequence belongs to the FtsA/MreB family. Forms polymers.

The protein localises to the cytoplasm. In terms of biological role, forms membrane-associated dynamic filaments that are essential for cell shape determination. Acts by regulating cell wall synthesis and cell elongation, and thus cell shape. A feedback loop between cell geometry and MreB localization may maintain elongated cell shape by targeting cell wall growth to regions of negative cell wall curvature. This chain is Cell shape-determining protein MreB, found in Pasteurella multocida (strain Pm70).